A 70-amino-acid polypeptide reads, in one-letter code: Prokaryotic ubiquitin-like protein UBact (70 aa).

Basic and acidic residues-rich tracts occupy residues 1 to 15 (MPDQ…RKQG) and 24 to 50 (TRHD…RDPG). Residues 1-70 (MPDQRQQERS…RQQRREQSGE (70 aa)) form a disordered region. Residue Glu70 forms an Isoglutamyl lysine isopeptide (Glu-Lys) (interchain with K-? in acceptor proteins) linkage.

This sequence belongs to the ubiquitin-like protein UBact family.

In terms of biological role, may function as a protein modifier covalently attached to lysine residues of substrate proteins. This may serve to target the modified proteins for degradation by proteasomes. This Terrybacteria sp. (strain RIFCSPHIGHO2_01_FULL_58_15) protein is Prokaryotic ubiquitin-like protein UBact.